A 522-amino-acid polypeptide reads, in one-letter code: UPF0288 protein MTH_1865 (522 aa).

The protein belongs to the UPF0288 family.

The sequence is that of UPF0288 protein MTH_1865 from Methanothermobacter thermautotrophicus (strain ATCC 29096 / DSM 1053 / JCM 10044 / NBRC 100330 / Delta H) (Methanobacterium thermoautotrophicum).